A 468-amino-acid chain; its full sequence is UDP-N-acetylmuramate--L-alanine ligase (468 aa).

An ATP-binding site is contributed by 112-118 (GTHGKTT).

This sequence belongs to the MurCDEF family.

Its subcellular location is the cytoplasm. The enzyme catalyses UDP-N-acetyl-alpha-D-muramate + L-alanine + ATP = UDP-N-acetyl-alpha-D-muramoyl-L-alanine + ADP + phosphate + H(+). The protein operates within cell wall biogenesis; peptidoglycan biosynthesis. Its function is as follows. Cell wall formation. This chain is UDP-N-acetylmuramate--L-alanine ligase, found in Bordetella pertussis (strain Tohama I / ATCC BAA-589 / NCTC 13251).